We begin with the raw amino-acid sequence, 185 residues long: Putative lipoprotein LprB (185 aa).

Positions 1 to 24 (MRRKVRRLTLAVSALVALFPAVAG) are cleaved as a signal peptide. C25 carries the N-palmitoyl cysteine lipid modification. Residue C25 is the site of S-diacylglycerol cysteine attachment. Residues 26–50 (SDSGDNKPGATIPSTPANAEGRHGP) are disordered.

It localises to the cell membrane. This is Putative lipoprotein LprB (lprB) from Mycobacterium bovis (strain ATCC BAA-935 / AF2122/97).